The primary structure comprises 60 residues: DNA-directed RNA polymerase subunit Rpo6 (60 aa).

The protein belongs to the archaeal Rpo6/eukaryotic RPB6 RNA polymerase subunit family. In terms of assembly, part of the RNA polymerase complex.

The protein localises to the cytoplasm. The enzyme catalyses RNA(n) + a ribonucleoside 5'-triphosphate = RNA(n+1) + diphosphate. Functionally, DNA-dependent RNA polymerase (RNAP) catalyzes the transcription of DNA into RNA using the four ribonucleoside triphosphates as substrates. The polypeptide is DNA-directed RNA polymerase subunit Rpo6 (Halobacterium salinarum (strain ATCC 700922 / JCM 11081 / NRC-1) (Halobacterium halobium)).